The following is a 416-amino-acid chain: Glutamyl-tRNA reductase (416 aa).

Substrate contacts are provided by residues 50–53 (TCNR), Ser-109, 114–116 (EPQ), and Gln-120. Cys-51 (nucleophile) is an active-site residue. Residue 189 to 194 (GAGEMI) participates in NADP(+) binding.

It belongs to the glutamyl-tRNA reductase family. In terms of assembly, homodimer.

It catalyses the reaction (S)-4-amino-5-oxopentanoate + tRNA(Glu) + NADP(+) = L-glutamyl-tRNA(Glu) + NADPH + H(+). It participates in porphyrin-containing compound metabolism; protoporphyrin-IX biosynthesis; 5-aminolevulinate from L-glutamyl-tRNA(Glu): step 1/2. Catalyzes the NADPH-dependent reduction of glutamyl-tRNA(Glu) to glutamate 1-semialdehyde (GSA). The protein is Glutamyl-tRNA reductase of Ruthia magnifica subsp. Calyptogena magnifica.